Consider the following 160-residue polypeptide: UPF0262 protein BCAN_A0255 (160 aa).

The protein belongs to the UPF0262 family.

The chain is UPF0262 protein BCAN_A0255 from Brucella canis (strain ATCC 23365 / NCTC 10854 / RM-666).